Consider the following 873-residue polypeptide: Tetratricopeptide repeat protein 16 (873 aa).

The interval 1–20 (MTDSDEDALKVDQGPSRDIP) is disordered. TPR repeat units follow at residues 61–94 (VREYYSRGQQCLEQADWETAVLLFSRALHLDPQL), 96–128 (DFYALRAEAYLQLCDFSSAAQNLRRAYSLQQDN), 136–169 (TFVLYLQGQCLFEQCAFLDALNVFSHAAELQPEK), 251–284 (AQQARQDAGILAVQGKLQHALQRINRAIENNPLD), 285–318 (PSLFLFRGTMYRRLQEFDGAVEDFLKVLDMVTED), 331–364 (LLTYNDFAVHCYRQGAYQEGVLLLNKALRDEQQE), 365–398 (KGLYINRGDCFFQLGNLAFAEADYQQALALSPQD), and 406–439 (GLLQEKMGFCEQRRKQFQKAENHFSTAIRHNPQK). Disordered regions lie at residues 553–626 (EELK…TSET) and 639–873 (SATA…YEAV). A compositionally biased stretch (acidic residues) spans 571–582 (GEAEAPEEEEEK). Over residues 583–593 (EKEKKEEKKSE) the composition is skewed to basic and acidic residues. Composition is skewed to polar residues over residues 600–626 (ASLSDSYLDQTSSASSMSFRTTGTSET), 639–663 (SATAVTFSDSSLLKTQSSDSGNNRE), and 675–693 (TQGQRQSLSKTEPTQSQRR). Basic residues predominate over residues 694 to 708 (NSSKTKATIHKRNSS). The span at 709–750 (KTKATQSQRRNSSKTRATQGQGQSSSKTEATQGQRQSSSEIE) shows a compositional bias: polar residues. The span at 763 to 784 (KTTRSPRQRPRKVKAARGRSWR) shows a compositional bias: basic residues. 2 stretches are compositionally biased toward polar residues: residues 800–828 (RSSTKTEAFYDSNWSLSKTEYAQGQGQRS) and 836–860 (GKSQGMSSTSSKAESTWGPSPSLSK).

The protein is Tetratricopeptide repeat protein 16 (TTC16) of Homo sapiens (Human).